The following is a 1231-amino-acid chain: RNA-binding protein 33 (1231 aa).

The segment covering 1 to 13 (MAAALGAGGGAGA) has biased composition (gly residues). Disordered stretches follow at residues 1-168 (MAAA…EEEQ) and 219-261 (SQVA…FKTE). Residue Ala2 is modified to N-acetylalanine. A compositionally biased stretch (basic and acidic residues) spans 20 to 36 (QFDKPGAERSWRRRAAD). Residues 37–49 (EDWDSELEDDLLG) show a composition bias toward acidic residues. Residue Ser41 is modified to Phosphoserine. Over residues 82–108 (FSSQGVTISLNTTSGIVTSFELSDNTN) the composition is skewed to polar residues. Acidic residues-rich tracts occupy residues 112–124 (GEQE…GDDE) and 153–168 (LTED…EEEQ). A compositionally biased stretch (basic and acidic residues) spans 224-240 (ETHEGGMETLELQKDIK). Positions 241-252 (EESDEEDDDDEE) are enriched in acidic residues. A phosphoserine mark is found at Ser243 and Ser271. 2 disordered regions span residues 297–436 (FEER…KNIH) and 452–761 (PLLP…NLRE). Residues 305-316 (KQGRYGSRRGGR) show a composition bias toward basic residues. Over residues 327–344 (GDQRRDNSERGRMKEHRP) the composition is skewed to basic and acidic residues. Residues 360 to 379 (LIPPPQPQPPPPPPPPPPQQ) are compositionally biased toward pro residues. Positions 380–398 (QPIRSLFQQQQLQPLLPLQ) are enriched in low complexity. Over residues 469-483 (FPGPPEFPQHTPGPV) the composition is skewed to pro residues. Arg520 carries the asymmetric dimethylarginine modification. Composition is skewed to pro residues over residues 531–540 (SPPPPPPPPT), 604–618 (FIPP…PGQP), 632–647 (LHPP…PQPQ), and 661–682 (PLQP…PPQH). Composition is skewed to polar residues over residues 713–728 (QTAQ…QCTP) and 736–759 (AASQ…NSNL). Ser792 and Ser816 each carry phosphoserine. 3 disordered regions span residues 796–840 (RAVV…ETRL), 876–932 (ERLA…FPGA), and 998–1080 (ETPH…MRQQ). A compositionally biased stretch (basic and acidic residues) spans 820 to 829 (QPKEEAKPEA). Residues 840 to 891 (LYRLKIEEQKRLREEILKQKELRRQQQAGARKKELLERLAQQQQQQQQQQHQ) are a coiled coil. Residues 880–901 (QQQQQQQQQQHQPQQQQQQPQQ) are compositionally biased toward low complexity. Phosphoserine is present on residues Ser1002 and Ser1010. Residue Lys1019 forms a Glycyl lysine isopeptide (Lys-Gly) (interchain with G-Cter in SUMO2) linkage. 2 positions are modified to phosphoserine: Ser1032 and Ser1051.

Associates with the NXF1-NXT1 RNA export complex. Interacts with ALKBH5; facilitating ALKBH5 recruitment to m6A-containing transcripts. Interacts with SENP1; promoting ALKBH5 deSUMOylation and subsequent activation.

It localises to the nucleus. It is found in the cytoplasm. Its function is as follows. RNA reader protein, which recognizes and binds specific RNAs, thereby regulating RNA metabolic processes, such as mRNA export, mRNA stability and/or translation. Binds a subset of intronless RNAs containing GC-rich elements, such as NORAD, and promotes their nuclear export by recruiting target RNAs to components of the NXF1-NXT1 RNA export machinery. Specifically recognizes and binds N6-methyladenosine (m6A)-containing mRNAs, promoting their demethylation by ALKBH5. Acts as an molecular adapter, which (1) promotes ALKBH5 recruitment to m6A-containing transcripts and (2) activates ALKBH5 demethylase activity by recruiting SENP1, leading to ALKBH5 deSUMOylation and subsequent activation. The chain is RNA-binding protein 33 from Mus musculus (Mouse).